A 327-amino-acid chain; its full sequence is Annexin A8 (327 aa).

Annexin repeat units follow at residues 21–92 (FNPD…ALMY), 93–164 (PPYR…CLLQ), 177–249 (GLAL…TVVK), and 253–324 (NLHG…NLVG). Ca(2+) is bound by residues methionine 266, glycine 268, glycine 270, and aspartate 310.

Belongs to the annexin family.

In terms of biological role, this protein is an anticoagulant protein that acts as an indirect inhibitor of the thromboplastin-specific complex, which is involved in the blood coagulation cascade. The polypeptide is Annexin A8 (ANXA8) (Bos taurus (Bovine)).